Consider the following 378-residue polypeptide: uncharacterized protein (378 aa).

One can recognise a Guanylate cyclase domain in the interval 208–317 (GIGFADLSSF…NPVNLAARLV (110 aa)).

It belongs to the adenylyl cyclase class-4/guanylyl cyclase family.

This is an uncharacterized protein from Mycobacterium bovis (strain ATCC BAA-935 / AF2122/97).